The following is a 587-amino-acid chain: Aspartate--tRNA(Asp/Asn) ligase (587 aa).

L-aspartate is bound at residue Glu-173. An aspartate region spans residues 197–200 (QLFK). Arg-219 serves as a coordination point for L-aspartate. ATP-binding positions include 219 to 221 (RDE) and Gln-228. His-448 is a binding site for L-aspartate. ATP is bound at residue Glu-481. An L-aspartate-binding site is contributed by Arg-488. Residue 533 to 536 (GLDR) participates in ATP binding.

The protein belongs to the class-II aminoacyl-tRNA synthetase family. Type 1 subfamily. As to quaternary structure, homodimer.

The protein localises to the cytoplasm. It catalyses the reaction tRNA(Asx) + L-aspartate + ATP = L-aspartyl-tRNA(Asx) + AMP + diphosphate. Functionally, aspartyl-tRNA synthetase with relaxed tRNA specificity since it is able to aspartylate not only its cognate tRNA(Asp) but also tRNA(Asn). Reaction proceeds in two steps: L-aspartate is first activated by ATP to form Asp-AMP and then transferred to the acceptor end of tRNA(Asp/Asn). In Alcanivorax borkumensis (strain ATCC 700651 / DSM 11573 / NCIMB 13689 / SK2), this protein is Aspartate--tRNA(Asp/Asn) ligase.